Consider the following 239-residue polypeptide: Cysteine-rich venom protein ENH1 (239 aa).

The N-terminal stretch at 1–18 (MIVFILLSLAAVLQQFVA) is a signal peptide. The SCP domain maps to 37-165 (VDMHNSFRRS…PYNYFYVCQY (129 aa)). 7 disulfides stabilise this stretch: Cys74–Cys152, Cys91–Cys166, Cys147–Cys163, Cys185–Cys192, Cys188–Cys197, Cys210–Cys228, and Cys219–Cys232. A ShKT domain is found at 201 to 234 (CPITNTFTNCDSLLQQNSCEDSYIKTNCGASCFC).

The protein belongs to the CRISP family. Expressed by the venom gland.

Its subcellular location is the secreted. In terms of biological role, blocks contraction of smooth muscle elicited by high potassium-induced depolarization, but does not block caffeine-stimulated contraction. May target voltage-gated calcium channels on smooth muscle. This is Cysteine-rich venom protein ENH1 from Pseudoferania polylepis (Macleay's water snake).